A 470-amino-acid polypeptide reads, in one-letter code: Uronate isomerase (470 aa).

It belongs to the metallo-dependent hydrolases superfamily. Uronate isomerase family.

The enzyme catalyses D-glucuronate = D-fructuronate. It carries out the reaction aldehydo-D-galacturonate = keto-D-tagaturonate. The protein operates within carbohydrate metabolism; pentose and glucuronate interconversion. The chain is Uronate isomerase from Klebsiella pneumoniae (strain 342).